The primary structure comprises 449 residues: Trigger factor (449 aa).

A PPIase FKBP-type domain is found at 174-261; that stretch reads GDIAVVGFKG…LKDLKTRELP (88 aa). Residues 430–449 form a disordered region; the sequence is ENSTVTEKAPDKDKPSVTDA. Over residues 437 to 449 the composition is skewed to basic and acidic residues; sequence KAPDKDKPSVTDA.

The protein belongs to the FKBP-type PPIase family. Tig subfamily.

It localises to the cytoplasm. It catalyses the reaction [protein]-peptidylproline (omega=180) = [protein]-peptidylproline (omega=0). Involved in protein export. Acts as a chaperone by maintaining the newly synthesized protein in an open conformation. Functions as a peptidyl-prolyl cis-trans isomerase. In Synechococcus sp. (strain CC9311), this protein is Trigger factor.